The chain runs to 118 residues: Ribonuclease P protein component (118 aa).

It belongs to the RnpA family. Consists of a catalytic RNA component (M1 or rnpB) and a protein subunit.

The enzyme catalyses Endonucleolytic cleavage of RNA, removing 5'-extranucleotides from tRNA precursor.. In terms of biological role, RNaseP catalyzes the removal of the 5'-leader sequence from pre-tRNA to produce the mature 5'-terminus. It can also cleave other RNA substrates such as 4.5S RNA. The protein component plays an auxiliary but essential role in vivo by binding to the 5'-leader sequence and broadening the substrate specificity of the ribozyme. The polypeptide is Ribonuclease P protein component (Vibrio vulnificus (strain CMCP6)).